The primary structure comprises 1116 residues: Ubiquitin C-terminal hydrolase 12 (1116 aa).

The span at 1 to 10 (MTMMTPPPVD) shows a compositional bias: pro residues. Residues 1 to 52 (MTMMTPPPVDQPEDEEMLVPNSDLVDGPAQPMEVTQPETAASTVENQPAEDP) form a disordered region. Positions 36–46 (QPETAASTVEN) are enriched in polar residues. The MATH domain occupies 54-179 (TLKFTWTIPN…NDTVLVEAEV (126 aa)). The region spanning 199-524 (VGLKNQGATC…NAYMLVYIRE (326 aa)) is the USP domain. The active-site Nucleophile is the Cys-208. His-455 functions as the Proton acceptor in the catalytic mechanism.

It belongs to the peptidase C19 family. Interacts with SIC/RON3.

The enzyme catalyses Thiol-dependent hydrolysis of ester, thioester, amide, peptide and isopeptide bonds formed by the C-terminal Gly of ubiquitin (a 76-residue protein attached to proteins as an intracellular targeting signal).. Functionally, recognizes and hydrolyzes the peptide bond at the C-terminal Gly of ubiquitin. Involved in the processing of poly-ubiquitin precursors as well as that of ubiquitinated proteins. Positive regulator of root meristem development that, together with UBP13, prevents the ubiquitination and turnover of RGFR1 induced by the RGF1 hormone peptide, thus influencing PLT1 and PLT2 expression. The sequence is that of Ubiquitin C-terminal hydrolase 12 from Arabidopsis thaliana (Mouse-ear cress).